The primary structure comprises 161 residues: Protein-export protein SecB (161 aa).

It belongs to the SecB family. Homotetramer, a dimer of dimers. One homotetramer interacts with 1 SecA dimer.

It is found in the cytoplasm. Functionally, one of the proteins required for the normal export of preproteins out of the cell cytoplasm. It is a molecular chaperone that binds to a subset of precursor proteins, maintaining them in a translocation-competent state. It also specifically binds to its receptor SecA. The sequence is that of Protein-export protein SecB from Pseudomonas fluorescens (strain Pf0-1).